The chain runs to 213 residues: Cytochrome c biogenesis ATP-binding export protein CcmA (213 aa).

Residues 7–213 enclose the ABC transporter domain; sequence LKTKKLACQR…VRLENYKFTE (207 aa). Residue 39-46 participates in ATP binding; sequence GHNGIGKT.

This sequence belongs to the ABC transporter superfamily. CcmA exporter (TC 3.A.1.107) family. The complex is composed of two ATP-binding proteins (CcmA) and two transmembrane proteins (CcmB).

Its subcellular location is the cell inner membrane. It carries out the reaction heme b(in) + ATP + H2O = heme b(out) + ADP + phosphate + H(+). Functionally, part of the ABC transporter complex CcmAB involved in the biogenesis of c-type cytochromes; once thought to export heme, this seems not to be the case, but its exact role is uncertain. Responsible for energy coupling to the transport system. The polypeptide is Cytochrome c biogenesis ATP-binding export protein CcmA (Pasteurella multocida (strain Pm70)).